We begin with the raw amino-acid sequence, 258 residues long: Ubiquinone/menaquinone biosynthesis C-methyltransferase UbiE (258 aa).

Residues Thr81, Asp102, and 130–131 each bind S-adenosyl-L-methionine; that span reads NA.

The protein belongs to the class I-like SAM-binding methyltransferase superfamily. MenG/UbiE family.

It carries out the reaction a 2-demethylmenaquinol + S-adenosyl-L-methionine = a menaquinol + S-adenosyl-L-homocysteine + H(+). The enzyme catalyses a 2-methoxy-6-(all-trans-polyprenyl)benzene-1,4-diol + S-adenosyl-L-methionine = a 5-methoxy-2-methyl-3-(all-trans-polyprenyl)benzene-1,4-diol + S-adenosyl-L-homocysteine + H(+). It participates in quinol/quinone metabolism; menaquinone biosynthesis; menaquinol from 1,4-dihydroxy-2-naphthoate: step 2/2. It functions in the pathway cofactor biosynthesis; ubiquinone biosynthesis. Methyltransferase required for the conversion of demethylmenaquinol (DMKH2) to menaquinol (MKH2) and the conversion of 2-polyprenyl-6-methoxy-1,4-benzoquinol (DDMQH2) to 2-polyprenyl-3-methyl-6-methoxy-1,4-benzoquinol (DMQH2). The chain is Ubiquinone/menaquinone biosynthesis C-methyltransferase UbiE from Rhizobium rhizogenes (strain K84 / ATCC BAA-868) (Agrobacterium radiobacter).